Here is a 39-residue protein sequence, read N- to C-terminus: AKLSTEDLLEQFKGLTLIELSEFVKAFEETFEVGAAAPV.

This sequence belongs to the bacterial ribosomal protein bL12 family. As to quaternary structure, homodimer. Part of the ribosomal stalk of the 50S ribosomal subunit. Forms a multimeric L10(L12)X complex, where L10 forms an elongated spine to which 2 to 4 L12 dimers bind in a sequential fashion. Binds GTP-bound translation factors.

Functionally, forms part of the ribosomal stalk which helps the ribosome interact with GTP-bound translation factors. Is thus essential for accurate translation. The protein is Large ribosomal subunit protein bL12 (rplL) of Arthrobacter glacialis.